The sequence spans 138 residues: MRTLWIVAVCLIGVEGSLLEFGMMILEETGKNPLTSYSFYGCYCGVGGKGTPKDATDRCCFVHDCCYGNLPDCNPKIDRYKYHRKNGAIVCGKGTSCENRICECDRAAAICFRKNLKTYNHIYKYYPDFLCKKESEKC.

The first 16 residues, 1–16 (MRTLWIVAVCLIGVEG), serve as a signal peptide directing secretion. Intrachain disulfides connect Cys-42-Cys-131, Cys-44-Cys-60, Cys-59-Cys-111, Cys-65-Cys-138, Cys-66-Cys-104, Cys-73-Cys-97, and Cys-91-Cys-102. Residues Tyr-43, Gly-45, and Gly-47 each coordinate Ca(2+). Residue His-63 is part of the active site. Residue Asp-64 participates in Ca(2+) binding. The active site involves Asp-105.

Ca(2+) serves as cofactor. Expressed by the venom gland.

It is found in the secreted. It catalyses the reaction a 1,2-diacyl-sn-glycero-3-phosphocholine + H2O = a 1-acyl-sn-glycero-3-phosphocholine + a fatty acid + H(+). Snake venom phospholipase A2 that may have a strong anticoagulant activity. Is able to suppress the acetylcholine (ACh)-evoked current mediated by alpha-7 (CHRNA7)-similar nAChRs in L.stagnalis neurons (IC(50)=10.5 uM) and to compete with alpha-bungarotoxin for binding to muscle- and alpha-7 neuronal nAChR types, as well as to AChBPs. In inhibition of alpha-bungarotoxin binding, this toxin is mostly active against T.californica nAChR (IC(50)=0.26 uM), it is moderately active against human alpha-7 nAChR (IC(50)=14 uM), and is not active against L.stagnalis and A.californica AChBP (IC(50)&gt;30 uM). This Vipera renardi (Steppe viper) protein is Basic phospholipase A2 vurtoxin.